A 109-amino-acid chain; its full sequence is RNA-binding protein Hfq (109 aa).

The region spanning Asp-9 to Val-68 is the Sm domain. The tract at residues Pro-77 to Glu-109 is disordered.

This sequence belongs to the Hfq family. As to quaternary structure, homohexamer.

RNA chaperone that binds small regulatory RNA (sRNAs) and mRNAs to facilitate mRNA translational regulation in response to envelope stress, environmental stress and changes in metabolite concentrations. Also binds with high specificity to tRNAs. In Francisella tularensis subsp. tularensis (strain FSC 198), this protein is RNA-binding protein Hfq.